Reading from the N-terminus, the 281-residue chain is Shikimate dehydrogenase (NADP(+)) (281 aa).

Residues Ser-14–Ser-16 and Thr-61 each bind shikimate. Lys-65 functions as the Proton acceptor in the catalytic mechanism. 2 residues coordinate shikimate: Asn-86 and Asp-101. Residues Gly-127–Ala-131, Asn-151–Arg-156, and Val-216 each bind NADP(+). Position 218 (Tyr-218) interacts with shikimate. Gly-239 is an NADP(+) binding site.

Belongs to the shikimate dehydrogenase family. Homodimer.

It catalyses the reaction shikimate + NADP(+) = 3-dehydroshikimate + NADPH + H(+). Its pathway is metabolic intermediate biosynthesis; chorismate biosynthesis; chorismate from D-erythrose 4-phosphate and phosphoenolpyruvate: step 4/7. Its function is as follows. Involved in the biosynthesis of the chorismate, which leads to the biosynthesis of aromatic amino acids. Catalyzes the reversible NADPH linked reduction of 3-dehydroshikimate (DHSA) to yield shikimate (SA). The polypeptide is Shikimate dehydrogenase (NADP(+)) (Azorhizobium caulinodans (strain ATCC 43989 / DSM 5975 / JCM 20966 / LMG 6465 / NBRC 14845 / NCIMB 13405 / ORS 571)).